Consider the following 318-residue polypeptide: Inactive dihydropteroate synthase 2 (318 aa).

Residues 1–25 (MRSTPPASAGRSTPPALAGHSTPPA) are disordered. The region spanning 42-299 (ALIMAIVNRT…EVAATRRVLE (258 aa)) is the Pterin-binding domain.

Belongs to the DHPS family. In terms of assembly, homodimer.

Functionally, has very low affinity for the DHPS substrate 6-hydroxymethyl-7,8-dihydropterin-pyrophosphate, but can bind the inhibitor dapsone. Seems to lack dihydropteroate synthase activity, and does probably not function in folate metabolism. The sequence is that of Inactive dihydropteroate synthase 2 (folP2) from Mycobacterium bovis (strain ATCC BAA-935 / AF2122/97).